A 577-amino-acid chain; its full sequence is Aspartate--tRNA(Asp/Asn) ligase (577 aa).

Glu171 provides a ligand contact to L-aspartate. Residues 195–198 (QLFK) form an aspartate region. Arg217 is a binding site for L-aspartate. ATP is bound by residues 217 to 219 (RDE) and Gln226. Position 444 (His444) interacts with L-aspartate. ATP is bound at residue Glu474. Arg481 serves as a coordination point for L-aspartate. Residue 526-529 (GFDR) participates in ATP binding.

This sequence belongs to the class-II aminoacyl-tRNA synthetase family. Type 1 subfamily. As to quaternary structure, homodimer.

It is found in the cytoplasm. It catalyses the reaction tRNA(Asx) + L-aspartate + ATP = L-aspartyl-tRNA(Asx) + AMP + diphosphate. Functionally, aspartyl-tRNA synthetase with relaxed tRNA specificity since it is able to aspartylate not only its cognate tRNA(Asp) but also tRNA(Asn). Reaction proceeds in two steps: L-aspartate is first activated by ATP to form Asp-AMP and then transferred to the acceptor end of tRNA(Asp/Asn). This Helicobacter pylori (strain P12) protein is Aspartate--tRNA(Asp/Asn) ligase.